A 503-amino-acid chain; its full sequence is Cytochrome c-552 (503 aa).

Positions 1–16 (MKKNTIILVGALIAIA) are cleaved as a signal peptide. His-102 contacts heme c. Heme is bound by residues Cys-130, Cys-133, and Lys-134. Heme c contacts are provided by Cys-168, Cys-171, His-172, Cys-210, Cys-213, and His-214. Ca(2+) contacts are provided by Glu-216, Tyr-217, Lys-273, and Gln-275. Tyr-217 serves as a coordination point for substrate. His-276 serves as a coordination point for substrate. Residues His-287, Cys-294, Cys-297, His-298, His-312, Cys-325, Cys-328, His-329, and His-404 each coordinate heme c.

It belongs to the cytochrome c-552 family. Requires Ca(2+) as cofactor. Heme c serves as cofactor.

It localises to the periplasm. The enzyme catalyses 6 Fe(III)-[cytochrome c] + NH4(+) + 2 H2O = 6 Fe(II)-[cytochrome c] + nitrite + 8 H(+). Its pathway is nitrogen metabolism; nitrate reduction (assimilation). Functionally, catalyzes the reduction of nitrite to ammonia, consuming six electrons in the process. The protein is Cytochrome c-552 of Maridesulfovibrio salexigens (strain ATCC 14822 / DSM 2638 / NCIMB 8403 / VKM B-1763) (Desulfovibrio salexigens).